Here is a 504-residue protein sequence, read N- to C-terminus: MAISDEPESVATALNHSSLRRRPSATSTAGLFNSPETTTDSSGDDLAKDSGSDDSINSDDAAVNSQQQNEKQDTDFSVLKFAYRPSVPAHRKVKESPLSSDTIFRQSHAGLFNLCIVVLVAVNSRLIIENLMKYGWLIKSGFWFSSKSLRDWPLFMCCLSLVVFPFAAFIVEKLAQRKCIPEPVVVVLHIIITSTSLFYPVLVILRCDSAFVSGVTLMLFSCVVWLKLVSYAHTNYDMRALTKLVEKGEALLDTLNMDYPYNVSFKSLAYFLVAPTLCYQPSYPRTPYIRKGWLFRQLVKLIIFTGVMGFIIEQYINPIVQNSQHPLKGNLLYATERVLKLSVPNLYVWLCMFYCFFHLWLNILAELLRFGDREFYKDWWNAKTVEDYWRMWNMPVHKWMIRHLYFPCLRHGLPKAAALLIAFLVSALFHELCIAVPCHIFKLWAFGGIMFQVPLVLITNYLQNKFRNSMVGNMIFWFIFSILGQPMCVLLYYHDLMNRKGKLD.

Residues methionine 1–glutamine 72 form a disordered region. A compositionally biased stretch (polar residues) spans serine 24–serine 41. The span at aspartate 53–serine 65 shows a compositional bias: low complexity. Helical transmembrane passes span histidine 108 to isoleucine 128, tryptophan 152 to glutamate 172, valine 184 to isoleucine 204, serine 209 to valine 229, tyrosine 259 to tyrosine 279, leucine 301 to glutamine 321, and valine 348 to leucine 368. Residues phenylalanine 375 to asparagine 381 carry the FYXDWWN motif motif. The next 3 helical transmembrane spans lie at alanine 416–valine 436, cysteine 438–isoleucine 458, and valine 471–leucine 491. Histidine 430 is a catalytic residue.

Belongs to the membrane-bound acyltransferase family. Sterol o-acyltransferase subfamily. As to expression, highly expressed in flowers and pods. Expressed at low levels in roots, stems and leaves.

The protein resides in the endoplasmic reticulum membrane. The enzyme catalyses an acyl-CoA + a 1,2-diacyl-sn-glycerol = a triacyl-sn-glycerol + CoA. Its pathway is glycerolipid metabolism; triacylglycerol biosynthesis. Major contributors to triacylglycerol (TAG) synthesis and oil accumulation in developing seeds. Catalyzes the acylation of the sn-3 hydroxy group of sn-1,2-diacylglycerol using acyl-CoA. Has a marked preference for oleoyl-CoA and sn-1,2-dioleoylglycerol over vernoloyl-CoA and sn-1,2-divernoloylglycerol. In Glycine max (Soybean), this protein is Diacylglycerol O-acyltransferase 1B.